Reading from the N-terminus, the 151-residue chain is Large ribosomal subunit protein uL13 (151 aa).

This sequence belongs to the universal ribosomal protein uL13 family. As to quaternary structure, part of the 50S ribosomal subunit.

Its function is as follows. This protein is one of the early assembly proteins of the 50S ribosomal subunit, although it is not seen to bind rRNA by itself. It is important during the early stages of 50S assembly. This chain is Large ribosomal subunit protein uL13, found in Acaryochloris marina (strain MBIC 11017).